The primary structure comprises 76 residues: Sec-independent protein translocase protein TatA (76 aa).

The helical transmembrane segment at 1–21 threads the bilayer; it reads MGSFSIWHWLIVLAVVLLLFG. Residues 43 to 76 are disordered; sequence MSDEDAKDDARDSGRTIDAKADETVNDVKKTTKS. Positions 50–76 are enriched in basic and acidic residues; the sequence is DDARDSGRTIDAKADETVNDVKKTTKS.

Belongs to the TatA/E family. The Tat system comprises two distinct complexes: a TatABC complex, containing multiple copies of TatA, TatB and TatC subunits, and a separate TatA complex, containing only TatA subunits. Substrates initially bind to the TatABC complex, which probably triggers association of the separate TatA complex to form the active translocon.

The protein resides in the cell inner membrane. Functionally, part of the twin-arginine translocation (Tat) system that transports large folded proteins containing a characteristic twin-arginine motif in their signal peptide across membranes. TatA could form the protein-conducting channel of the Tat system. The chain is Sec-independent protein translocase protein TatA from Brucella anthropi (strain ATCC 49188 / DSM 6882 / CCUG 24695 / JCM 21032 / LMG 3331 / NBRC 15819 / NCTC 12168 / Alc 37) (Ochrobactrum anthropi).